Here is an 88-residue protein sequence, read N- to C-terminus: MLCAIYKSKKKLGSYLYVANREDFSSVPSVLLEHFGKPELVMMFNLLGRKALYNVDCNEVLETIKRQGFYLQIAKQDDGLFNSLSEIK.

In terms of domain architecture, YcgL spans 1 to 85; that stretch reads MLCAIYKSKK…QDDGLFNSLS (85 aa).

This is YcgL domain-containing protein CGSHiGG_01115 from Haemophilus influenzae (strain PittGG).